The chain runs to 415 residues: Alpha-N-acetylgalactosaminidase (415 aa).

Residues 1–17 form the signal peptide; it reads MLQKTVLLLALVAQVLM. Cystine bridges form between cysteine 38–cysteine 80, cysteine 42–cysteine 49, and cysteine 127–cysteine 158. Substrate contacts are provided by residues 78-79 and lysine 154; that span reads DD. The active-site Nucleophile is the aspartate 156. A glycan (N-linked (GlcNAc...) asparagine) is linked at asparagine 177. An intrachain disulfide couples cysteine 187 to cysteine 209. Serine 188 lines the substrate pocket. An N-linked (GlcNAc...) asparagine glycan is attached at asparagine 201. Substrate contacts are provided by arginine 213 and aspartate 217. Aspartate 217 acts as the Proton donor in catalysis. Phosphoserine is present on residues serine 322 and serine 332. Asparagine 385 is a glycosylation site (N-linked (GlcNAc...) asparagine).

It belongs to the glycosyl hydrolase 27 family. Homodimer.

Its subcellular location is the lysosome. It carries out the reaction Cleavage of non-reducing alpha-(1-&gt;3)-N-acetylgalactosamine residues from human blood group A and AB mucin glycoproteins, Forssman hapten and blood group A lacto series glycolipids.. It catalyses the reaction a neolactoside IV(3)-alpha-GalNAc,IV(2)-alpha-Fuc-nLc4Cer(d18:1(4E)) + H2O = a neolactoside IV(2)-alpha-Fuc-nLc4Cer(d18:1(4E)) + N-acetyl-alpha-D-galactosamine. The catalysed reaction is a neolactoside IV(3)-alpha-GalNAc,IV(2)-alpha-Fuc-nLc4Cer(d18:0) + H2O = a neolactoside IV(2)-alpha-Fuc-nLc4Cer(d18:0) + N-acetyl-alpha-D-galactosamine. The enzyme catalyses a globoside IV3GalNAc-Gb4Cer + H2O = N-acetyl-alpha-D-galactosamine + a globoside Gb4Cer. Functionally, removes terminal alpha-N-acetylgalactosamine residues from glycolipids and glycopeptides. Required for the breakdown of glycolipids. This is Alpha-N-acetylgalactosaminidase (Naga) from Mus musculus (Mouse).